An 83-amino-acid chain; its full sequence is Exodeoxyribonuclease 7 small subunit (83 aa).

It belongs to the XseB family. In terms of assembly, heterooligomer composed of large and small subunits.

It localises to the cytoplasm. The enzyme catalyses Exonucleolytic cleavage in either 5'- to 3'- or 3'- to 5'-direction to yield nucleoside 5'-phosphates.. Functionally, bidirectionally degrades single-stranded DNA into large acid-insoluble oligonucleotides, which are then degraded further into small acid-soluble oligonucleotides. The polypeptide is Exodeoxyribonuclease 7 small subunit (Moorella thermoacetica (strain ATCC 39073 / JCM 9320)).